The primary structure comprises 453 residues: Chromosomal replication initiator protein DnaA (453 aa).

The segment at 1–71 (MSEKEIWEKV…QAILFDVVGY (71 aa)) is domain I, interacts with DnaA modulators. The domain II stretch occupies residues 71–114 (YEVKPHFITTEELANYSNNETATPKEATKPSTETTEDNHVLGRE). The interval 115-331 (QFNAHNTFDT…GALTRLLAYS (217 aa)) is domain III, AAA+ region. Positions 159, 161, 162, and 163 each coordinate ATP. The interval 332-453 (QLLGKPITTE…ENLEKEIRNV (122 aa)) is domain IV, binds dsDNA.

This sequence belongs to the DnaA family. In terms of assembly, oligomerizes as a right-handed, spiral filament on DNA at oriC.

The protein localises to the cytoplasm. Plays an essential role in the initiation and regulation of chromosomal replication. ATP-DnaA binds to the origin of replication (oriC) to initiate formation of the DNA replication initiation complex once per cell cycle. Binds the DnaA box (a 9 base pair repeat at the origin) and separates the double-stranded (ds)DNA. Forms a right-handed helical filament on oriC DNA; dsDNA binds to the exterior of the filament while single-stranded (ss)DNA is stabiized in the filament's interior. The ATP-DnaA-oriC complex binds and stabilizes one strand of the AT-rich DNA unwinding element (DUE), permitting loading of DNA polymerase. After initiation quickly degrades to an ADP-DnaA complex that is not apt for DNA replication. Binds acidic phospholipids. The polypeptide is Chromosomal replication initiator protein DnaA (Staphylococcus aureus (strain MRSA252)).